The following is a 447-amino-acid chain: Argininosuccinate synthase (447 aa).

Residues 17 to 25 (AFSGGLDTS) and Ala43 contribute to the ATP site. Residue Tyr99 participates in L-citrulline binding. ATP is bound by residues Gly129 and Thr131. L-aspartate is bound by residues Thr131, Asn135, and Asp136. Residue Asn135 coordinates L-citrulline. Residue Asp136 coordinates ATP. Residues Arg139 and Ser192 each contribute to the L-citrulline site. Asp194 is an ATP binding site. L-citrulline contacts are provided by Thr201, Glu203, and Glu280.

Belongs to the argininosuccinate synthase family. Type 2 subfamily. Homotetramer.

The protein localises to the cytoplasm. The catalysed reaction is L-citrulline + L-aspartate + ATP = 2-(N(omega)-L-arginino)succinate + AMP + diphosphate + H(+). The protein operates within amino-acid biosynthesis; L-arginine biosynthesis; L-arginine from L-ornithine and carbamoyl phosphate: step 2/3. This is Argininosuccinate synthase from Escherichia coli O9:H4 (strain HS).